A 754-amino-acid polypeptide reads, in one-letter code: Dynein regulatory complex protein 1 (754 aa).

2 disordered regions span residues 1-32 (MNPS…SDNP) and 55-76 (LGEY…YKQK). A coiled-coil region spans residues 98–388 (QVAADIREIH…QFKDLQKAIR (291 aa)). Residues 587 to 616 (MSQTDRRSSASKSDGDPTELEDQQGSDNGS) are disordered. Residues 704–743 (VLTQRAKLLMENDSLEQQNAEMQSLLQQYLQAKVNLELQV) are a coiled coil.

It belongs to the DRC1 family. As to quaternary structure, component of the nexin-dynein regulatory complex (N-DRC). Interacts with CCDC65/DRC2, DRC3, GAS8/DRC4 and TCTE1/DRC5.

The protein localises to the cytoplasm. Its subcellular location is the cytoskeleton. The protein resides in the cilium axoneme. It localises to the flagellum axoneme. In terms of biological role, component of the nexin-dynein regulatory complex (N-DRC) a key regulator of ciliary/flagellar motility which maintains the alignment and integrity of the distal axoneme and regulates microtubule sliding in motile axonemes. Plays a critical role in the assembly of N-DRC and also stabilizes the assembly of multiple inner dynein arms and radial spokes. Coassembles with CCDC65/DRC2 to form a central scaffold needed for assembly of the N-DRC and its attachment to the outer doublet microtubules. This is Dynein regulatory complex protein 1 (Drc1) from Rattus norvegicus (Rat).